The primary structure comprises 654 residues: MGSHAWGGAVFSAATLIAFGSVVHASGTVAETAPQSGHAVPADQLDGETLYKARCAACHDNAEGRTPSREVLSKNPASFILASMRTGAMVPMAEGLTLEEMTAIARAVGKADAKTDDGIDLRRIWGNSVEGTPLDAPQCSSAPTPVDLGAANQWNGWSTEKDNGRFQRKPALDVADIPKLKLKWAFQYPGSKNGQATVIGDRLFTTSTSGAVYALNAKTGCVYWRHAAEGATRTSPVIAALPEGAPAKTALFFSDFTKAAVALDAETGKQLWKTVVDDQPALQMTGSITYWDGKIYVPISSGTEAFAQIPTWECCKFRGALVALDAATGKILWKRYTTEQEPRPFKLNKAGRQMWGPSGGAIWVTPTVDEARRLIYVGTSNSYTDVPYDNSDSVMAIDADTGAVRWTVQLLADDNYIDGCWQKGKEHANCPNPLGPDFSIGAAPIYRKMADGKEFLLVGQKSGMIYALDPANKGAKIWERQLSLGSALGGIEFGTAADDGKVYAGVSDIASQAKDRGKPGLWALDIRTGEVAWNFLNAPDTKCRWNNWWCHGAFSQAISVIPGAIFAGSYDGHFRAFDTATGKIIWDVDTGTKAVTTLSGAKAFGGVMDGAGPTIAGGMVYVHSGYAGRSSESGGRDLRGTDGNILMAFSVDGK.

The N-terminal stretch at 1-32 (MGSHAWGGAVFSAATLIAFGSVVHASGTVAET) is a signal peptide. The Cytochrome c domain occupies 42–159 (ADQLDGETLY…AANQWNGWST (118 aa)). The heme c site is built by Cys55, Cys58, and His59.

This sequence belongs to the bacterial PQQ dehydrogenase family. As to quaternary structure, monomer. The cofactor is pyrroloquinoline quinone.

The protein resides in the periplasm. The catalysed reaction is a polyvinyl alcohol + 2n Fe(III)-[cytochrome c] = an oxidized polyvinyl alcohol + 2n Fe(II)-[cytochrome c] + 2n H(+). Its function is as follows. Catalyzes the oxidation of polyvinyl alcohol (PVA) in the polyvinyl alcohol degradation pathway. The protein is Polyvinylalcohol dehydrogenase (pvadh) of Sphingopyxis sp. (strain 113P3).